A 248-amino-acid polypeptide reads, in one-letter code: Segregation and condensation protein A (248 aa).

This sequence belongs to the ScpA family. As to quaternary structure, component of a cohesin-like complex composed of ScpA, ScpB and the Smc homodimer, in which ScpA and ScpB bind to the head domain of Smc. The presence of the three proteins is required for the association of the complex with DNA.

Its subcellular location is the cytoplasm. In terms of biological role, participates in chromosomal partition during cell division. May act via the formation of a condensin-like complex containing Smc and ScpB that pull DNA away from mid-cell into both cell halves. The polypeptide is Segregation and condensation protein A (Bacillus cytotoxicus (strain DSM 22905 / CIP 110041 / 391-98 / NVH 391-98)).